Reading from the N-terminus, the 81-residue chain is Ferredoxin (81 aa).

The 4Fe-4S ferredoxin-type domain occupies 2-30 (KYTIVDKETCIACGACGAAAPDIYDYDED). [4Fe-4S] cluster contacts are provided by C11, C14, C17, and C61.

The cofactor is [4Fe-4S] cluster.

Ferredoxins are iron-sulfur proteins that transfer electrons in a wide variety of metabolic reactions. This is Ferredoxin (fer) from Geobacillus stearothermophilus (Bacillus stearothermophilus).